A 681-amino-acid polypeptide reads, in one-letter code: 2-(S-pantetheinyl)-carbapenam-3-carboxylate methyltransferase (681 aa).

The 144-residue stretch at 1-144 (MTVPAARSGR…IERLADHPDY (144 aa)) folds into the B12-binding domain. Cob(II)alamin-binding residues include asparagine 18, serine 72, tyrosine 74, valine 75, histidine 103, glycine 126, and glutamate 127. A Radical SAM core domain is found at 192-417 (RDLRFYALWE…RLYVEEPGTP (226 aa)). [4Fe-4S] cluster is bound by residues cysteine 206 and cysteine 210. Phenylalanine 212 is a binding site for 5'-deoxyadenosine. Residue cysteine 213 coordinates [4Fe-4S] cluster. Cob(II)alamin is bound by residues aspartate 214 and cysteine 249. Glutamine 312, glutamate 349, and glycine 384 together coordinate 5'-deoxyadenosine.

It belongs to the methyltransferase superfamily. [4Fe-4S] cluster is required as a cofactor. Cob(II)alamin serves as cofactor.

The catalysed reaction is (2R,3R,5S)-2-(S-pantetheinyl)-carbapenam-3-carboxylate + AH2 + 2 S-adenosyl-L-methionine = (2R,3R,5S,6R)-6-(methyl)-2-(S-pantetheinyl)-carbapenam-3-carboxylate + 5'-deoxyadenosine + L-methionine + A + S-adenosyl-L-homocysteine + 2 H(+). The enzyme catalyses (2R,3R,5S,6R)-6-(methyl)-2-(S-pantetheinyl)-carbapenam-3-carboxylate + AH2 + 2 S-adenosyl-L-methionine = (2R,3R,5S,6R)-6-(ethyl)-2-(S-pantetheinyl)-carbapenam-3-carboxylate + 5'-deoxyadenosine + L-methionine + A + S-adenosyl-L-homocysteine + 2 H(+). It functions in the pathway antibiotic biosynthesis. Methyltransferase involved in the biosynthesis of the beta-lactam carbapenem antibiotic thienamycin. Catalyzes two consecutive S-adenosyl-L-methionine-dependent methylations to build out the C6-ethyl side chain in a stereocontrolled manner. In vitro can use methyl viologen and NADPH as the iron-sulfur cluster reductants. In Streptantibioticus cattleyicolor (strain ATCC 35852 / DSM 46488 / JCM 4925 / NBRC 14057 / NRRL 8057) (Streptomyces cattleya), this protein is 2-(S-pantetheinyl)-carbapenam-3-carboxylate methyltransferase.